Consider the following 208-residue polypeptide: dITP/XTP pyrophosphatase (208 aa).

Residue 16–21 (SNNKGK) participates in substrate binding. The Proton acceptor role is filled by aspartate 79. Aspartate 79 is a binding site for Mg(2+). Substrate-binding positions include serine 80, 166 to 169 (FGYD), lysine 189, and 194 to 195 (HR).

It belongs to the HAM1 NTPase family. In terms of assembly, homodimer. Mg(2+) serves as cofactor.

The enzyme catalyses XTP + H2O = XMP + diphosphate + H(+). The catalysed reaction is dITP + H2O = dIMP + diphosphate + H(+). It carries out the reaction ITP + H2O = IMP + diphosphate + H(+). Its function is as follows. Pyrophosphatase that catalyzes the hydrolysis of nucleoside triphosphates to their monophosphate derivatives, with a high preference for the non-canonical purine nucleotides XTP (xanthosine triphosphate), dITP (deoxyinosine triphosphate) and ITP. Seems to function as a house-cleaning enzyme that removes non-canonical purine nucleotides from the nucleotide pool, thus preventing their incorporation into DNA/RNA and avoiding chromosomal lesions. The protein is dITP/XTP pyrophosphatase of Acinetobacter baumannii (strain AB307-0294).